The primary structure comprises 116 residues: Aspartate 1-decarboxylase (116 aa).

Catalysis depends on Ser-25, which acts as the Schiff-base intermediate with substrate; via pyruvic acid. Ser-25 carries the pyruvic acid (Ser) modification. Substrate is bound at residue Thr-57. Residue Tyr-58 is the Proton donor of the active site. Residue 73 to 75 (GAA) coordinates substrate.

The protein belongs to the PanD family. As to quaternary structure, heterooctamer of four alpha and four beta subunits. It depends on pyruvate as a cofactor. Is synthesized initially as an inactive proenzyme, which is activated by self-cleavage at a specific serine bond to produce a beta-subunit with a hydroxyl group at its C-terminus and an alpha-subunit with a pyruvoyl group at its N-terminus.

Its subcellular location is the cytoplasm. It carries out the reaction L-aspartate + H(+) = beta-alanine + CO2. Its pathway is cofactor biosynthesis; (R)-pantothenate biosynthesis; beta-alanine from L-aspartate: step 1/1. Its function is as follows. Catalyzes the pyruvoyl-dependent decarboxylation of aspartate to produce beta-alanine. The polypeptide is Aspartate 1-decarboxylase (Fervidobacterium nodosum (strain ATCC 35602 / DSM 5306 / Rt17-B1)).